We begin with the raw amino-acid sequence, 292 residues long: Probable porphobilinogen deaminase (292 aa).

Cys233 carries the S-(dipyrrolylmethanemethyl)cysteine modification.

It belongs to the HMBS family. Dipyrromethane serves as cofactor.

It carries out the reaction 4 porphobilinogen + H2O = hydroxymethylbilane + 4 NH4(+). It functions in the pathway porphyrin-containing compound metabolism; protoporphyrin-IX biosynthesis; coproporphyrinogen-III from 5-aminolevulinate: step 2/4. In terms of biological role, tetrapolymerization of the monopyrrole PBG into the hydroxymethylbilane pre-uroporphyrinogen in several discrete steps. In Methanocaldococcus jannaschii (strain ATCC 43067 / DSM 2661 / JAL-1 / JCM 10045 / NBRC 100440) (Methanococcus jannaschii), this protein is Probable porphobilinogen deaminase (hemC).